The sequence spans 432 residues: Glutamate-1-semialdehyde 2,1-aminomutase (432 aa).

An N6-(pyridoxal phosphate)lysine modification is found at Lys-270.

It belongs to the class-III pyridoxal-phosphate-dependent aminotransferase family. HemL subfamily. As to quaternary structure, homodimer. Pyridoxal 5'-phosphate is required as a cofactor.

The protein resides in the cytoplasm. It catalyses the reaction (S)-4-amino-5-oxopentanoate = 5-aminolevulinate. The protein operates within porphyrin-containing compound metabolism; protoporphyrin-IX biosynthesis; 5-aminolevulinate from L-glutamyl-tRNA(Glu): step 2/2. In Acinetobacter baumannii (strain ACICU), this protein is Glutamate-1-semialdehyde 2,1-aminomutase.